A 99-amino-acid polypeptide reads, in one-letter code: MNSQEKLLKTVVRPHVSDKTYGLSDANSTIVFEVARTATKQDVKSAVEKLFEVKVESVNILNVKGKARRFGRVEGRTKAWKKAYVKLAEGHDINFVGAE.

It belongs to the universal ribosomal protein uL23 family. Part of the 50S ribosomal subunit. Contacts protein L29, and trigger factor when it is bound to the ribosome.

Its function is as follows. One of the early assembly proteins it binds 23S rRNA. One of the proteins that surrounds the polypeptide exit tunnel on the outside of the ribosome. Forms the main docking site for trigger factor binding to the ribosome. In Francisella philomiragia subsp. philomiragia (strain ATCC 25017 / CCUG 19701 / FSC 153 / O#319-036), this protein is Large ribosomal subunit protein uL23.